Reading from the N-terminus, the 241-residue chain is Phosphoribosylaminoimidazole-succinocarboxamide synthase (241 aa).

It belongs to the SAICAR synthetase family.

The catalysed reaction is 5-amino-1-(5-phospho-D-ribosyl)imidazole-4-carboxylate + L-aspartate + ATP = (2S)-2-[5-amino-1-(5-phospho-beta-D-ribosyl)imidazole-4-carboxamido]succinate + ADP + phosphate + 2 H(+). Its pathway is purine metabolism; IMP biosynthesis via de novo pathway; 5-amino-1-(5-phospho-D-ribosyl)imidazole-4-carboxamide from 5-amino-1-(5-phospho-D-ribosyl)imidazole-4-carboxylate: step 1/2. The polypeptide is Phosphoribosylaminoimidazole-succinocarboxamide synthase (Oenococcus oeni (strain ATCC BAA-331 / PSU-1)).